A 119-amino-acid polypeptide reads, in one-letter code: RKLAFRYRRVKELYNTYKNNIGGLLGPAKRDAWLQLRAEIEALTDSWLTNALKSLSIISTRSNCVNVLVTTTQLIPALAKVLLYSLGGAFPIENIYSATKIGKESCFERIVSRFGTNIT.

This sequence belongs to the HAD-like hydrolase superfamily. EYA family. Mg(2+) is required as a cofactor.

It is found in the cytoplasm. It localises to the nucleus. It carries out the reaction O-phospho-L-tyrosyl-[protein] + H2O = L-tyrosyl-[protein] + phosphate. Its function is as follows. Tyrosine phosphatase that specifically dephosphorylates 'Tyr-142' of histone H2AX (H2AXY142ph). 'Tyr-142' phosphorylation of histone H2AX plays a central role in DNA repair and acts as a mark that distinguishes between apoptotic and repair responses to genotoxic stress. Promotes efficient DNA repair by dephosphorylating H2AX, promoting the recruitment of DNA repair complexes containing MDC1. Its function as histone phosphatase probably explains its role in transcription regulation during organogenesis. May be involved in development of the eye. This Gallus gallus (Chicken) protein is Protein phosphatase EYA4 (EYA4).